The chain runs to 615 residues: 1-deoxy-D-xylulose-5-phosphate synthase (615 aa).

Residues His72 and 111–113 (GHS) contribute to the thiamine diphosphate site. Position 142 (Asp142) interacts with Mg(2+). Residues 143–144 (GA), Asn171, Tyr278, and Glu360 each bind thiamine diphosphate. Asn171 is a binding site for Mg(2+).

Belongs to the transketolase family. DXPS subfamily. Homodimer. It depends on Mg(2+) as a cofactor. Thiamine diphosphate is required as a cofactor.

It catalyses the reaction D-glyceraldehyde 3-phosphate + pyruvate + H(+) = 1-deoxy-D-xylulose 5-phosphate + CO2. It participates in metabolic intermediate biosynthesis; 1-deoxy-D-xylulose 5-phosphate biosynthesis; 1-deoxy-D-xylulose 5-phosphate from D-glyceraldehyde 3-phosphate and pyruvate: step 1/1. Functionally, catalyzes the acyloin condensation reaction between C atoms 2 and 3 of pyruvate and glyceraldehyde 3-phosphate to yield 1-deoxy-D-xylulose-5-phosphate (DXP). The chain is 1-deoxy-D-xylulose-5-phosphate synthase from Campylobacter jejuni subsp. jejuni serotype O:23/36 (strain 81-176).